Here is a 235-residue protein sequence, read N- to C-terminus: Protein YIP4 (235 aa).

5 helical membrane passes run 89 to 109, 114 to 134, 145 to 165, 186 to 206, and 215 to 235; these read ISAN…SLFV, SLFS…ALHL, LISY…NALV, VLSL…VAAV, and IIEI…STIL.

Belongs to the YIP1 family. Interacts with TVP18, TVP23, YIP1 and YIP5. Interacts with SEC4, YPT1, YPT6, YPT7, YPT10, YPT11, YPT31, YPT32 and YPT52; These proteins are all Rab GTPases.

The protein resides in the golgi apparatus membrane. In terms of biological role, may be involved in proper membrane localization of Rab GTPases. This Saccharomyces cerevisiae (strain ATCC 204508 / S288c) (Baker's yeast) protein is Protein YIP4 (YIP4).